The primary structure comprises 259 residues: Indole-3-glycerol phosphate synthase (259 aa).

This sequence belongs to the TrpC family.

The catalysed reaction is 1-(2-carboxyphenylamino)-1-deoxy-D-ribulose 5-phosphate + H(+) = (1S,2R)-1-C-(indol-3-yl)glycerol 3-phosphate + CO2 + H2O. The protein operates within amino-acid biosynthesis; L-tryptophan biosynthesis; L-tryptophan from chorismate: step 4/5. The chain is Indole-3-glycerol phosphate synthase from Dehalococcoides mccartyi (strain CBDB1).